The following is a 131-amino-acid chain: S-adenosylmethionine decarboxylase proenzyme (131 aa).

Ser-64 serves as the catalytic Schiff-base intermediate with substrate; via pyruvic acid. Ser-64 carries the post-translational modification Pyruvic acid (Ser); by autocatalysis. Catalysis depends on His-69, which acts as the Proton acceptor; for processing activity. Residue Cys-84 is the Proton donor; for catalytic activity of the active site.

Belongs to the prokaryotic AdoMetDC family. Type 1 subfamily. As to quaternary structure, heterotetramer of two alpha and two beta chains arranged as a dimer of alpha/beta heterodimers. Pyruvate serves as cofactor. Post-translationally, is synthesized initially as an inactive proenzyme. Formation of the active enzyme involves a self-maturation process in which the active site pyruvoyl group is generated from an internal serine residue via an autocatalytic post-translational modification. Two non-identical subunits are generated from the proenzyme in this reaction, and the pyruvate is formed at the N-terminus of the alpha chain, which is derived from the carboxyl end of the proenzyme. The post-translation cleavage follows an unusual pathway, termed non-hydrolytic serinolysis, in which the side chain hydroxyl group of the serine supplies its oxygen atom to form the C-terminus of the beta chain, while the remainder of the serine residue undergoes an oxidative deamination to produce ammonia and the pyruvoyl group blocking the N-terminus of the alpha chain.

It catalyses the reaction S-adenosyl-L-methionine + H(+) = S-adenosyl 3-(methylsulfanyl)propylamine + CO2. Its pathway is amine and polyamine biosynthesis; S-adenosylmethioninamine biosynthesis; S-adenosylmethioninamine from S-adenosyl-L-methionine: step 1/1. Functionally, catalyzes the decarboxylation of S-adenosylmethionine to S-adenosylmethioninamine (dcAdoMet), the propylamine donor required for the synthesis of the polyamines spermine and spermidine from the diamine putrescine. This chain is S-adenosylmethionine decarboxylase proenzyme, found in Thermoplasma acidophilum (strain ATCC 25905 / DSM 1728 / JCM 9062 / NBRC 15155 / AMRC-C165).